The chain runs to 339 residues: Heat-inducible transcription repressor HrcA (339 aa).

It belongs to the HrcA family.

In terms of biological role, negative regulator of class I heat shock genes (grpE-dnaK-dnaJ and groELS operons). Prevents heat-shock induction of these operons. This is Heat-inducible transcription repressor HrcA from Cutibacterium acnes (strain DSM 16379 / KPA171202) (Propionibacterium acnes).